Here is a 583-residue protein sequence, read N- to C-terminus: Pentatricopeptide repeat-containing protein At3g59040 (583 aa).

PPR repeat units follow at residues 138–172 (SEID…GSTP), 173–207 (NVIS…GPEP), 208–242 (SAIT…KKSP), 246–280 (DQKM…GVPQ), 281–312 (STVT…DIQP), 313–347 (DVVS…GVRP), 348–382 (THKA…RIFP), 383–417 (DLWS…GFEP), 418–452 (NIVT…GIKA), and 453–487 (NQTI…GVPP). A disordered region spans residues 525–583 (VYGSDDDEEGVEDISSESSDDEDEGDDDDDDARETVLYDKPQEGSLGYGSLQTEELVGL). A compositionally biased stretch (acidic residues) spans 528 to 556 (SDDDEEGVEDISSESSDDEDEGDDDDDDA). A compositionally biased stretch (basic and acidic residues) spans 557–566 (RETVLYDKPQ).

Belongs to the PPR family. P subfamily.

This Arabidopsis thaliana (Mouse-ear cress) protein is Pentatricopeptide repeat-containing protein At3g59040.